The sequence spans 677 residues: Platelet glycoprotein Ib alpha chain (677 aa).

Residues 1 to 16 (MHLLLWLLLLARLCRP) form the signal peptide. Residues 17-47 (EFICEVSKVTSQVEVNCDNKGLKALPPGLPG) enclose the LRRNT domain. Over 17–564 (EFICEVSKVT…NPDLCCLLPL (548 aa)) the chain is Extracellular. C20 and C33 are disulfide-bonded. LRR repeat units lie at residues 72-93 (RLAQ…GMLP), 94-115 (RLET…GRAL), 117-138 (ALTT…TLDG), 141-162 (HLHE…LLAP), 165-186 (QLRK…FLEG), and 189-210 (ELDT…FFGD). One can recognise an LRRCT domain in the interval 221–282 (NPWSCDCEIL…HTYQGKDCPS (62 aa)). 2 disulfides stabilise this stretch: C225–C264 and C227–C280. Sulfotyrosine occurs at positions 291 and 294. O-linked (GalNAc...) threonine glycans are attached at residues T309, T319, T323, T324, T346, T354, T368, T372, T376, T377, and T399. Residues 359-499 (TLGPIMPTTT…EPTTTPTSPT (141 aa)) form a disordered region. 4 stretches are compositionally biased toward low complexity: residues 362–385 (PIMP…TTPT), 393–403 (PTTLEPTTTPI), 411–421 (PTTLEPTTTPI), and 427–470 (TPST…TPTI). Pro residues predominate over residues 471–485 (PELPTPPTTPEPTMP). Over residues 486 to 499 (PTTLEPTTTPTSPT) the composition is skewed to low complexity. T487 carries an O-linked (GalNAc...) threonine glycan. S497 carries an O-linked (GalNAc...) serine glycan. An O-linked (GalNAc...) threonine glycan is attached at T500. O-linked (GalNAc...) serine glycosylation occurs at S523. A helical membrane pass occupies residues 565 to 585 (GFYILGLLWLLFASVVLILLL). At 586–677 (TWAQHVKPQA…VGVRYSSHSL (92 aa)) the chain is on the cytoplasmic side. S654 and S657 each carry phosphoserine.

Two GP-Ib beta are disulfide-linked to one GP-Ib alpha. GP-IX is complexed with the GP-Ib heterodimer via a non covalent linkage. Interacts with FLNB. Interacts with FLNA (via filamin repeats 4, 9, 12, 17, 19, 21, and 23). In terms of processing, O-glycosylated. Glycocalicin is the product of a proteolytic cleavage/shedding, catalyzed by ADAM17, which releases most of the extracellular domain. Binding sites for vWF and thrombin are in this part of the protein.

The protein localises to the membrane. In terms of biological role, GP-Ib, a surface membrane protein of platelets, participates in the formation of platelet plugs by binding to the A1 domain of vWF, which is already bound to the subendothelium. The sequence is that of Platelet glycoprotein Ib alpha chain (GP1BA) from Canis lupus familiaris (Dog).